The sequence spans 339 residues: Ketol-acid reductoisomerase (NADP(+)) (339 aa).

A KARI N-terminal Rossmann domain is found at M1–T182. NADP(+) is bound by residues Y24 to Q27, R48, S51, T53, and D83 to Q86. H108 is a catalytic residue. G134 is a binding site for NADP(+). Positions T183 to I328 constitute a KARI C-terminal knotted domain. Positions 191, 195, 227, and 231 each coordinate Mg(2+). S252 lines the substrate pocket.

It belongs to the ketol-acid reductoisomerase family. The cofactor is Mg(2+).

The catalysed reaction is (2R)-2,3-dihydroxy-3-methylbutanoate + NADP(+) = (2S)-2-acetolactate + NADPH + H(+). The enzyme catalyses (2R,3R)-2,3-dihydroxy-3-methylpentanoate + NADP(+) = (S)-2-ethyl-2-hydroxy-3-oxobutanoate + NADPH + H(+). It participates in amino-acid biosynthesis; L-isoleucine biosynthesis; L-isoleucine from 2-oxobutanoate: step 2/4. The protein operates within amino-acid biosynthesis; L-valine biosynthesis; L-valine from pyruvate: step 2/4. In terms of biological role, involved in the biosynthesis of branched-chain amino acids (BCAA). Catalyzes an alkyl-migration followed by a ketol-acid reduction of (S)-2-acetolactate (S2AL) to yield (R)-2,3-dihydroxy-isovalerate. In the isomerase reaction, S2AL is rearranged via a Mg-dependent methyl migration to produce 3-hydroxy-3-methyl-2-ketobutyrate (HMKB). In the reductase reaction, this 2-ketoacid undergoes a metal-dependent reduction by NADPH to yield (R)-2,3-dihydroxy-isovalerate. The protein is Ketol-acid reductoisomerase (NADP(+)) of Rhodopseudomonas palustris (strain BisA53).